The primary structure comprises 349 residues: Aminomethyltransferase (349 aa).

Belongs to the GcvT family. In terms of assembly, the glycine cleavage system is composed of four proteins: P, T, L and H.

It carries out the reaction N(6)-[(R)-S(8)-aminomethyldihydrolipoyl]-L-lysyl-[protein] + (6S)-5,6,7,8-tetrahydrofolate = N(6)-[(R)-dihydrolipoyl]-L-lysyl-[protein] + (6R)-5,10-methylene-5,6,7,8-tetrahydrofolate + NH4(+). Its function is as follows. The glycine cleavage system catalyzes the degradation of glycine. The chain is Aminomethyltransferase from Thermus thermophilus (strain ATCC 27634 / DSM 579 / HB8).